We begin with the raw amino-acid sequence, 344 residues long: L-threonine 3-dehydrogenase (344 aa).

Cys38 is a Zn(2+) binding site. Residues Thr40 and His43 each act as charge relay system in the active site. Positions 63, 64, 93, 96, 99, and 107 each coordinate Zn(2+). NAD(+) is bound by residues Ile175, Asp195, Arg200, 263–265 (LGI), and 287–288 (IY).

This sequence belongs to the zinc-containing alcohol dehydrogenase family. In terms of assembly, homotetramer. It depends on Zn(2+) as a cofactor.

The protein resides in the cytoplasm. It catalyses the reaction L-threonine + NAD(+) = (2S)-2-amino-3-oxobutanoate + NADH + H(+). It functions in the pathway amino-acid degradation; L-threonine degradation via oxydo-reductase pathway; glycine from L-threonine: step 1/2. Functionally, catalyzes the NAD(+)-dependent oxidation of L-threonine to 2-amino-3-ketobutyrate. This chain is L-threonine 3-dehydrogenase, found in Deinococcus deserti (strain DSM 17065 / CIP 109153 / LMG 22923 / VCD115).